The chain runs to 432 residues: UDP-N-acetylglucosamine 1-carboxyvinyltransferase (432 aa).

22 to 23 (KN) is a binding site for phosphoenolpyruvate. Position 96 (arginine 96) interacts with UDP-N-acetyl-alpha-D-glucosamine. Cysteine 120 serves as the catalytic Proton donor. Cysteine 120 bears the 2-(S-cysteinyl)pyruvic acid O-phosphothioketal mark. Residues 125–129 (RPVDL), aspartate 310, and isoleucine 332 each bind UDP-N-acetyl-alpha-D-glucosamine.

Belongs to the EPSP synthase family. MurA subfamily.

It is found in the cytoplasm. It carries out the reaction phosphoenolpyruvate + UDP-N-acetyl-alpha-D-glucosamine = UDP-N-acetyl-3-O-(1-carboxyvinyl)-alpha-D-glucosamine + phosphate. The protein operates within cell wall biogenesis; peptidoglycan biosynthesis. Cell wall formation. Adds enolpyruvyl to UDP-N-acetylglucosamine. This Caulobacter sp. (strain K31) protein is UDP-N-acetylglucosamine 1-carboxyvinyltransferase.